Consider the following 325-residue polypeptide: Transaldolase (325 aa).

Lysine 125 serves as the catalytic Schiff-base intermediate with substrate.

This sequence belongs to the transaldolase family. Type 2 subfamily.

It localises to the cytoplasm. It catalyses the reaction D-sedoheptulose 7-phosphate + D-glyceraldehyde 3-phosphate = D-erythrose 4-phosphate + beta-D-fructose 6-phosphate. It participates in carbohydrate degradation; pentose phosphate pathway; D-glyceraldehyde 3-phosphate and beta-D-fructose 6-phosphate from D-ribose 5-phosphate and D-xylulose 5-phosphate (non-oxidative stage): step 2/3. Functionally, transaldolase is important for the balance of metabolites in the pentose-phosphate pathway. This Campylobacter jejuni subsp. doylei (strain ATCC BAA-1458 / RM4099 / 269.97) protein is Transaldolase.